We begin with the raw amino-acid sequence, 383 residues long: ATP phosphoribosyltransferase regulatory subunit (383 aa).

This sequence belongs to the class-II aminoacyl-tRNA synthetase family. HisZ subfamily. Heteromultimer composed of HisG and HisZ subunits.

The protein resides in the cytoplasm. Its pathway is amino-acid biosynthesis; L-histidine biosynthesis; L-histidine from 5-phospho-alpha-D-ribose 1-diphosphate: step 1/9. Functionally, required for the first step of histidine biosynthesis. May allow the feedback regulation of ATP phosphoribosyltransferase activity by histidine. The polypeptide is ATP phosphoribosyltransferase regulatory subunit (Cupriavidus necator (strain ATCC 17699 / DSM 428 / KCTC 22496 / NCIMB 10442 / H16 / Stanier 337) (Ralstonia eutropha)).